The following is a 336-amino-acid chain: Alpha-N-acetylgalactosaminide alpha-2,6-sialyltransferase 5 (336 aa).

Residues 1–8 (MKTLMRHG) lie on the Cytoplasmic side of the membrane. A helical; Signal-anchor for type II membrane protein membrane pass occupies residues 9-29 (LAVCLVLTTMCTSLLLVYSSL). Topologically, residues 30-336 (GSQKERPPQQ…VNHAEGKPVF (307 aa)) are lumenal. Positions 34–76 (ERPPQQQQQQQQQQQQAATATGSTQLVESSPQPRRTAPAGPRQ) are disordered. Over residues 38–49 (QQQQQQQQQQQQ) the composition is skewed to low complexity. The span at 50–66 (AATATGSTQLVESSPQP) shows a compositional bias: polar residues. The cysteines at positions 96 and 245 are disulfide-linked. 2 N-linked (GlcNAc...) asparagine glycosylation sites follow: Asn-137 and Asn-161.

It belongs to the glycosyltransferase 29 family. As to expression, high expression in forebrain and to a lesser extent in cerebellum. No expression in salivary gland, intestine, liver, kidney, heart, lung, thymus and spleen.

It is found in the golgi apparatus membrane. It carries out the reaction a ganglioside GM1b (d18:1(4E)) + CMP-N-acetyl-beta-neuraminate = a ganglioside GD1alpha (d18:1(4E)) + CMP + H(+). It catalyses the reaction N-acetyl-alpha-neuraminosyl-(2-&gt;3)-beta-D-galactosyl-(1-&gt;3)-N-acetyl-beta-D-glucosaminyl-(1-&gt;3)-beta-D-galactosyl-(1-&gt;4)-beta-D-glucosyl-(1&lt;-&gt;1')-N-acyl-sphing-4-enine + CMP-N-acetyl-beta-neuraminate = N-acetyl-alpha-neuraminosyl-(2-&gt;3)-beta-D-galactosyl-(1-&gt;3)-[N-acetyl-alpha-neuraminosyl-(2-&gt;6)]-N-acetyl-beta-D-glucosaminyl-(1-&gt;3)-beta-D-galactosyl-(1-&gt;4)-beta-D-glucosyl-(1&lt;-&gt;1')-N-acyl-sphing-4-enine + CMP + H(+). It functions in the pathway glycolipid biosynthesis. Functionally, predominantly catalyzes the biosynthesis of ganglioside GD1alpha from GM1b in the brain, by transferring the sialyl group (N-acetyl-alpha-neuraminyl or NeuAc) from CMP-NeuAc to the GalNAc residue on the NeuAc-alpha-2,3-Gal-beta-1,3-GalNAc sequence of GM1b. GD1alpha is a critical molecule in the communication and interaction between neuronal cells and their supportive cells, particularly in brain tissues, and functions as an adhesion molecule in the process of metastasis. Also shows activity towards sialyl Lc4Cer (N-acetyl-alpha-neuraminosyl-(2-&gt;3)-beta-D-galactosyl-(1-&gt;3)-N-acetyl-beta-D-glucosaminyl-(1-&gt;3)-beta-D-galactosyl-(1-&gt;4)-beta-D-glucosyl-(1&lt;-&gt;1')-N-acyl-sphing-4-enine) generating disialyl Lc4Cer, which can lead to the synthesis of disialyl Lewis a (Le(a)), suggested to be a cancer-associated antigen. The protein is Alpha-N-acetylgalactosaminide alpha-2,6-sialyltransferase 5 (St6galnac5) of Mus musculus (Mouse).